The chain runs to 772 residues: Semaphorin-3A (772 aa).

A signal peptide spans 1–22 (MGWLRGIALLSLGVLLAGRVNC). Positions 31 to 514 (RLKLSYKEML…SATGVSQLPL (484 aa)) constitute a Sema domain. Residue Asn-53 is glycosylated (N-linked (GlcNAc...) asparagine). Cys-103 and Cys-114 are oxidised to a cystine. Asn-125 carries N-linked (GlcNAc...) asparagine glycosylation. 4 disulfide bridges follow: Cys-132-Cys-141, Cys-269-Cys-381, Cys-293-Cys-341, and Cys-517-Cys-535. The region spanning 576–665 (PSGQTLEEKI…GFIQTLLKVT (90 aa)) is the Ig-like C2-type domain. Asn-591 carries N-linked (GlcNAc...) asparagine glycosylation. The cysteines at positions 650 and 723 are disulfide-linked. Residues 730–772 (DRKQRRQRPANAQVNTNKWKHLQENKKGRNRRTHEFERAPRSV) form a disordered region. A compositionally biased stretch (basic and acidic residues) spans 750–772 (HLQENKKGRNRRTHEFERAPRSV).

Belongs to the semaphorin family. As to expression, expressed at relatively high levels in brain and muscle, moderate levels in lung, bursa, and heart and virtually absent in liver. Collapsin-1, -2, -3, and -5 bind to overlapping but distinct axon tracts.

Its subcellular location is the secreted. Its function is as follows. Induces the collapse and paralysis of neuronal growth cones. Could serve as a ligand that guides specific growth cones by a motility-inhibiting mechanism. Binds to neuropilin. The polypeptide is Semaphorin-3A (SEMA3A) (Gallus gallus (Chicken)).